We begin with the raw amino-acid sequence, 360 residues long: Photosystem II protein D1 (360 aa).

The next 3 helical transmembrane spans lie at 29 to 46, 118 to 133, and 142 to 156; these read YIGWFGVLMIPTLLTATT, HFLLGVASYMGREWEL, and WIFVAFSAPVAAASA. Chlorophyll a is bound at residue His118. Tyr126 serves as a coordination point for pheophytin a. 2 residues coordinate [CaMn4O5] cluster: Asp170 and Glu189. Residues 197 to 218 form a helical membrane-spanning segment; sequence FHMAGVAGVFGGSLFSAMHGSL. Position 198 (His198) interacts with chlorophyll a. Residues His215 and 264-265 contribute to the a quinone site; that span reads SF. His215 is a binding site for Fe cation. His272 contacts Fe cation. The helical transmembrane segment at 274-288 threads the bilayer; it reads FLAAWPVVRIWLTAL. His332, Glu333, Asp342, and Ala344 together coordinate [CaMn4O5] cluster. A propeptide spanning residues 345-360 is cleaved from the precursor; the sequence is AGEVLPVAVSAPAVHA.

Belongs to the reaction center PufL/M/PsbA/D family. PSII is composed of 1 copy each of membrane proteins PsbA, PsbB, PsbC, PsbD, PsbE, PsbF, PsbH, PsbI, PsbJ, PsbK, PsbL, PsbM, PsbT, PsbX, PsbY, PsbZ, Psb30/Ycf12, at least 3 peripheral proteins of the oxygen-evolving complex and a large number of cofactors. It forms dimeric complexes. It depends on The D1/D2 heterodimer binds P680, chlorophylls that are the primary electron donor of PSII, and subsequent electron acceptors. It shares a non-heme iron and each subunit binds pheophytin, quinone, additional chlorophylls, carotenoids and lipids. D1 provides most of the ligands for the Mn4-Ca-O5 cluster of the oxygen-evolving complex (OEC). There is also a Cl(-1) ion associated with D1 and D2, which is required for oxygen evolution. The PSII complex binds additional chlorophylls, carotenoids and specific lipids. as a cofactor. Tyr-161 forms a radical intermediate that is referred to as redox-active TyrZ, YZ or Y-Z. In terms of processing, C-terminally processed by CTPA; processing is essential to allow assembly of the oxygen-evolving complex and thus photosynthetic growth.

The protein resides in the plastid. Its subcellular location is the chloroplast thylakoid membrane. The catalysed reaction is 2 a plastoquinone + 4 hnu + 2 H2O = 2 a plastoquinol + O2. Photosystem II (PSII) is a light-driven water:plastoquinone oxidoreductase that uses light energy to abstract electrons from H(2)O, generating O(2) and a proton gradient subsequently used for ATP formation. It consists of a core antenna complex that captures photons, and an electron transfer chain that converts photonic excitation into a charge separation. The D1/D2 (PsbA/PsbD) reaction center heterodimer binds P680, the primary electron donor of PSII as well as several subsequent electron acceptors. This chain is Photosystem II protein D1, found in Bumilleriopsis filiformis (Yellow-green alga).